The primary structure comprises 302 residues: tRNA pseudouridine synthase B (302 aa).

Asp-45 serves as the catalytic Nucleophile.

The protein belongs to the pseudouridine synthase TruB family. Type 1 subfamily.

The enzyme catalyses uridine(55) in tRNA = pseudouridine(55) in tRNA. Functionally, responsible for synthesis of pseudouridine from uracil-55 in the psi GC loop of transfer RNAs. The polypeptide is tRNA pseudouridine synthase B (Francisella philomiragia subsp. philomiragia (strain ATCC 25017 / CCUG 19701 / FSC 153 / O#319-036)).